The primary structure comprises 245 residues: Adenosylcobinamide-GDP ribazoletransferase (245 aa).

5 helical membrane passes run 35–55 (WFPL…ALGL), 108–128 (IGAF…IGAH), 137–157 (GVLI…AALV), 176–196 (IAIG…TPAI), and 197–217 (TTVT…HLAR).

It belongs to the CobS family. Requires Mg(2+) as cofactor.

The protein resides in the cell inner membrane. It catalyses the reaction alpha-ribazole + adenosylcob(III)inamide-GDP = adenosylcob(III)alamin + GMP + H(+). The enzyme catalyses alpha-ribazole 5'-phosphate + adenosylcob(III)inamide-GDP = adenosylcob(III)alamin 5'-phosphate + GMP + H(+). It participates in cofactor biosynthesis; adenosylcobalamin biosynthesis; adenosylcobalamin from cob(II)yrinate a,c-diamide: step 7/7. Functionally, joins adenosylcobinamide-GDP and alpha-ribazole to generate adenosylcobalamin (Ado-cobalamin). Also synthesizes adenosylcobalamin 5'-phosphate from adenosylcobinamide-GDP and alpha-ribazole 5'-phosphate. This chain is Adenosylcobinamide-GDP ribazoletransferase, found in Nitratidesulfovibrio vulgaris (strain ATCC 29579 / DSM 644 / CCUG 34227 / NCIMB 8303 / VKM B-1760 / Hildenborough) (Desulfovibrio vulgaris).